A 105-amino-acid chain; its full sequence is Large ribosomal subunit protein bL21 (105 aa).

This sequence belongs to the bacterial ribosomal protein bL21 family. In terms of assembly, part of the 50S ribosomal subunit. Contacts protein L20.

Functionally, this protein binds to 23S rRNA in the presence of protein L20. The sequence is that of Large ribosomal subunit protein bL21 from Thermotoga maritima (strain ATCC 43589 / DSM 3109 / JCM 10099 / NBRC 100826 / MSB8).